A 368-amino-acid chain; its full sequence is UPF0284 protein PCC8801_3324 (368 aa).

It belongs to the UPF0284 family.

The chain is UPF0284 protein PCC8801_3324 from Rippkaea orientalis (strain PCC 8801 / RF-1) (Cyanothece sp. (strain PCC 8801)).